The primary structure comprises 96 residues: MNLRPLHDRVIIKRLDQESKTASGIIIPDAAAEKPDQGEVLAVGPGKRDDGGKLNAPDVKVGDRVLFGKYAGQTVKVDSEELIVMREDDIMAVVQK.

The protein belongs to the GroES chaperonin family. Heptamer of 7 subunits arranged in a ring. Interacts with the chaperonin GroEL.

The protein resides in the cytoplasm. Functionally, together with the chaperonin GroEL, plays an essential role in assisting protein folding. The GroEL-GroES system forms a nano-cage that allows encapsulation of the non-native substrate proteins and provides a physical environment optimized to promote and accelerate protein folding. GroES binds to the apical surface of the GroEL ring, thereby capping the opening of the GroEL channel. The protein is Co-chaperonin GroES of Polynucleobacter necessarius subsp. necessarius (strain STIR1).